The chain runs to 159 residues: Ribosomal RNA large subunit methyltransferase H (159 aa).

S-adenosyl-L-methionine-binding positions include Leu-76, Gly-108, and 127 to 132 (FSKMTF).

This sequence belongs to the RNA methyltransferase RlmH family. In terms of assembly, homodimer.

It localises to the cytoplasm. It carries out the reaction pseudouridine(1915) in 23S rRNA + S-adenosyl-L-methionine = N(3)-methylpseudouridine(1915) in 23S rRNA + S-adenosyl-L-homocysteine + H(+). Its function is as follows. Specifically methylates the pseudouridine at position 1915 (m3Psi1915) in 23S rRNA. In Clostridium tetani (strain Massachusetts / E88), this protein is Ribosomal RNA large subunit methyltransferase H.